The sequence spans 820 residues: Quinate repressor protein (820 aa).

The interval 25–79 (SFEQMLLQQDSNESSRRTSPSRTHSRVDLERHSSHIVSLSSSNGSPSLEDPENRL) is disordered. The segment covering 59–71 (HIVSLSSSNGSPS) has biased composition (low complexity).

It in the N-terminal section; belongs to the shikimate kinase family. This sequence in the 2nd section; belongs to the type-I 3-dehydroquinase family. In the C-terminal section; belongs to the shikimate dehydrogenase family. Interacts with qutA; transcriptional activator of the quinate utilization pathway genes.

In terms of biological role, multi-domain repressor protein that negatively regulates transcription of the quinate utilization pathway genes. May mediate its repressor activity by binding directly to the qutA activator protein. The protein is Quinate repressor protein (qutR) of Talaromyces stipitatus (strain ATCC 10500 / CBS 375.48 / QM 6759 / NRRL 1006) (Penicillium stipitatum).